The chain runs to 565 residues: DNA ligase B (565 aa).

The N6-AMP-lysine intermediate role is filled by Lys130.

It belongs to the NAD-dependent DNA ligase family. LigB subfamily.

The catalysed reaction is NAD(+) + (deoxyribonucleotide)n-3'-hydroxyl + 5'-phospho-(deoxyribonucleotide)m = (deoxyribonucleotide)n+m + AMP + beta-nicotinamide D-nucleotide.. Catalyzes the formation of phosphodiester linkages between 5'-phosphoryl and 3'-hydroxyl groups in double-stranded DNA using NAD as a coenzyme and as the energy source for the reaction. This chain is DNA ligase B, found in Yersinia enterocolitica serotype O:8 / biotype 1B (strain NCTC 13174 / 8081).